Reading from the N-terminus, the 427-residue chain is Serine--tRNA ligase (427 aa).

231–233 provides a ligand contact to L-serine; that stretch reads TAE. 262–264 provides a ligand contact to ATP; the sequence is RSE. L-serine is bound at residue glutamate 285. Residue 349–352 coordinates ATP; it reads EISS. L-serine is bound at residue serine 385.

This sequence belongs to the class-II aminoacyl-tRNA synthetase family. Type-1 seryl-tRNA synthetase subfamily. Homodimer. The tRNA molecule binds across the dimer.

The protein localises to the cytoplasm. It catalyses the reaction tRNA(Ser) + L-serine + ATP = L-seryl-tRNA(Ser) + AMP + diphosphate + H(+). It carries out the reaction tRNA(Sec) + L-serine + ATP = L-seryl-tRNA(Sec) + AMP + diphosphate + H(+). It functions in the pathway aminoacyl-tRNA biosynthesis; selenocysteinyl-tRNA(Sec) biosynthesis; L-seryl-tRNA(Sec) from L-serine and tRNA(Sec): step 1/1. Catalyzes the attachment of serine to tRNA(Ser). Is also able to aminoacylate tRNA(Sec) with serine, to form the misacylated tRNA L-seryl-tRNA(Sec), which will be further converted into selenocysteinyl-tRNA(Sec). The polypeptide is Serine--tRNA ligase (Sinorhizobium fredii (strain NBRC 101917 / NGR234)).